The chain runs to 465 residues: VGFKAGVKDYKLTYYTPDYETKDTDILAAFRVTPQPGVPPEEAGAAVAAESSTGTWTTVWTDGLTSLDRYKGRCYHIEPVAGEENQYIAYVAYPLDLFEEGSVTNMFTSIVGNVFGFKALRALRLEDLRIPPAYSKTFQGPPHGIQVERDKLNKYGRPLLGCTIKPKLGLSAKNYGRAVYECLRGGLDFTKDDENVNSQPFMRWRDRFVFCAEAIYKAQAETGEIKGHYLNATAGTCEEMIKRAVFARELGVPIVMHDYLTGGFTANTSLAHYCRDNGLLLHIHRAMHAVIDRQKNHGMHFRVLAKALRLSGGDHVHAGTVVGKLEGEREITLGFVDLLRDDYVEKDRSRGIYFTQDWVSLPGVLPVASGGIHVWHMPALTEIFGDDSVLQFGGGTLGHPWGNAPGAVANRVALEACVQARNEGRDLAREGNEIIREASKWSPELAAACEVWKEIKFEFEAMDTL.

At Lys4 the chain carries N6,N6,N6-trimethyllysine. The substrate site is built by Asn113 and Thr163. Lys165 functions as the Proton acceptor in the catalytic mechanism. Lys167 is a substrate binding site. Lys191, Asp193, and Glu194 together coordinate Mg(2+). An N6-carboxylysine modification is found at Lys191. The active-site Proton acceptor is His284. Positions 285, 317, and 369 each coordinate substrate.

This sequence belongs to the RuBisCO large chain family. Type I subfamily. In terms of assembly, heterohexadecamer of 8 large chains and 8 small chains; disulfide-linked. The disulfide link is formed within the large subunit homodimers. Mg(2+) is required as a cofactor. Post-translationally, the disulfide bond which can form in the large chain dimeric partners within the hexadecamer appears to be associated with oxidative stress and protein turnover.

It is found in the plastid. Its subcellular location is the chloroplast. It carries out the reaction 2 (2R)-3-phosphoglycerate + 2 H(+) = D-ribulose 1,5-bisphosphate + CO2 + H2O. It catalyses the reaction D-ribulose 1,5-bisphosphate + O2 = 2-phosphoglycolate + (2R)-3-phosphoglycerate + 2 H(+). Functionally, ruBisCO catalyzes two reactions: the carboxylation of D-ribulose 1,5-bisphosphate, the primary event in carbon dioxide fixation, as well as the oxidative fragmentation of the pentose substrate in the photorespiration process. Both reactions occur simultaneously and in competition at the same active site. The chain is Ribulose bisphosphate carboxylase large chain from Manilkara zapota (Sapodilla plum).